Reading from the N-terminus, the 90-residue chain is Co-chaperonin GroES (90 aa).

The protein belongs to the GroES chaperonin family. Heptamer of 7 subunits arranged in a ring. Interacts with the chaperonin GroEL.

It localises to the cytoplasm. Functionally, together with the chaperonin GroEL, plays an essential role in assisting protein folding. The GroEL-GroES system forms a nano-cage that allows encapsulation of the non-native substrate proteins and provides a physical environment optimized to promote and accelerate protein folding. GroES binds to the apical surface of the GroEL ring, thereby capping the opening of the GroEL channel. The polypeptide is Co-chaperonin GroES (Helicobacter hepaticus (strain ATCC 51449 / 3B1)).